Consider the following 431-residue polypeptide: Synaptotagmin-11 (431 aa).

Over 1–15 the chain is Vesicular; that stretch reads MAEITNIRPSFDVSP. The chain crosses the membrane as a helical span at residues 16-36; the sequence is VVAGLIGASVLVVCVSVTVFV. The Cytoplasmic segment spans residues 37 to 431; the sequence is WSCCHQQAEK…VAKWHSLSEY (395 aa). S134 bears the Phosphoserine mark. Positions 134-154 are disordered; that stretch reads SPITSLTPGESKTTSPSSPEE. Over residues 140 to 151 the composition is skewed to low complexity; that stretch reads TPGESKTTSPSS. 2 C2 domains span residues 157 to 279 and 291 to 426; these read MLGS…QLTR and SRGE…AKWH. Ca(2+) contacts are provided by D250, S253, and D256.

Belongs to the synaptotagmin family. As to quaternary structure, homodimer. Can also form heterodimers. Interacts with PRKN. Interacts (via C2 2 domain) with AGO2 and SND1; the interaction with SND1 is direct. Interacts with KIF1A; the interaction increases in presence of calcium. It depends on Ca(2+) as a cofactor. In terms of processing, ubiquitinated, at least by PRKN, and targeted to the proteasome complex for degradation. Ubiquitination is inhibited by ATP13A2.

It is found in the cytoplasmic vesicle membrane. It localises to the perikaryon. The protein localises to the golgi apparatus. Its subcellular location is the trans-Golgi network membrane. The protein resides in the recycling endosome membrane. It is found in the lysosome membrane. It localises to the cytoplasmic vesicle. The protein localises to the phagosome. Its subcellular location is the cell projection. The protein resides in the axon. It is found in the dendrite. It localises to the postsynaptic density. The protein localises to the clathrin-coated vesicle membrane. Functionally, synaptotagmin family member involved in vesicular and membrane trafficking which does not bind Ca(2+). Inhibits clathrin-mediated and bulk endocytosis, functions to ensure precision in vesicle retrieval. Plays an important role in dopamine transmission by regulating endocytosis and the vesicle-recycling process. Essential component of a neuronal vesicular trafficking pathway that differs from the synaptic vesicle trafficking pathway but is crucial for development and synaptic plasticity. In macrophages and microglia, inhibits the conventional cytokine secretion, of at least IL6 and TNF, and phagocytosis. In astrocytes, regulates lysosome exocytosis, mechanism required for the repair of injured astrocyte cell membrane. Required for the ATP13A2-mediated regulation of the autophagy-lysosome pathway. This Homo sapiens (Human) protein is Synaptotagmin-11.